The primary structure comprises 231 residues: Biosynthetic peptidoglycan transglycosylase (231 aa).

The chain crosses the membrane as a helical span at residues leucine 7–phenylalanine 27.

This sequence belongs to the glycosyltransferase 51 family.

It is found in the cell inner membrane. It carries out the reaction [GlcNAc-(1-&gt;4)-Mur2Ac(oyl-L-Ala-gamma-D-Glu-L-Lys-D-Ala-D-Ala)](n)-di-trans,octa-cis-undecaprenyl diphosphate + beta-D-GlcNAc-(1-&gt;4)-Mur2Ac(oyl-L-Ala-gamma-D-Glu-L-Lys-D-Ala-D-Ala)-di-trans,octa-cis-undecaprenyl diphosphate = [GlcNAc-(1-&gt;4)-Mur2Ac(oyl-L-Ala-gamma-D-Glu-L-Lys-D-Ala-D-Ala)](n+1)-di-trans,octa-cis-undecaprenyl diphosphate + di-trans,octa-cis-undecaprenyl diphosphate + H(+). It functions in the pathway cell wall biogenesis; peptidoglycan biosynthesis. In terms of biological role, peptidoglycan polymerase that catalyzes glycan chain elongation from lipid-linked precursors. This is Biosynthetic peptidoglycan transglycosylase from Janthinobacterium sp. (strain Marseille) (Minibacterium massiliensis).